Consider the following 2028-residue polypeptide: Pecanex-like protein 3 (2028 aa).

Transmembrane regions (helical) follow at residues 33-53 (CFHL…YMVL) and 54-74 (PPSL…FATI). N-linked (GlcNAc...) asparagine glycosylation occurs at N95. Residues 96 to 116 (STMGEQEEEAAQGESSLPRDP) are disordered. S127 is modified (phosphoserine). T129 carries the phosphothreonine modification. Disordered regions lie at residues 193–239 (IGDL…PMSP) and 263–625 (LVRT…SHSR). A compositionally biased stretch (pro residues) spans 198–208 (QTPPGVVPDPS). 2 stretches are compositionally biased toward basic and acidic residues: residues 263–273 (LVRTSSRREQC) and 305–319 (TDRE…EKTN). Residue N319 is glycosylated (N-linked (GlcNAc...) asparagine). Position 370 is a phosphothreonine (T370). Phosphoserine is present on residues S392 and S431. Residues 427 to 437 (GSELSPASSLR) show a composition bias toward polar residues. Over residues 444–459 (TDSSSSTSCYSPESSQ) the composition is skewed to low complexity. Residues 488 to 497 (TQRTPSTASA) show a composition bias toward polar residues. 2 positions are modified to phosphoserine: S505 and S521. 7 consecutive transmembrane segments (helical) span residues 793-815 (NIFG…LKGF), 819-836 (IWVF…YSLL), 852-872 (WVIA…IWLL), 880-900 (PFPP…FFCA), 903-923 (VATV…LPQV), 946-968 (SPLT…YGFC), and 980-1000 (HVPV…YHLS). S1025 is modified (phosphoserine). Helical transmembrane passes span 1053-1073 (LVMC…TVFI), 1078-1098 (VLGF…HYLL), 1244-1264 (FVLT…HAFA), and 1280-1300 (LLSG…VFIM). A Phosphoserine modification is found at S1697. N1770 carries an N-linked (GlcNAc...) asparagine glycan. The interval 1845–2028 (GLTSLSNHPP…AAQPLLEHQY (184 aa)) is disordered. Residues 1890 to 1921 (RPPPLLQWPPPRLPGPPPASPAPTEGPRPSRP) show a composition bias toward pro residues. Residues S1909 and S1955 each carry the phosphoserine modification. Low complexity predominate over residues 1966–1977 (PLDLSLSPDVSS). The segment covering 1978–1987 (EASPARTTQD) has biased composition (polar residues).

Belongs to the pecanex family.

The protein resides in the membrane. The sequence is that of Pecanex-like protein 3 from Mus musculus (Mouse).